Here is a 255-residue protein sequence, read N- to C-terminus: MTTIDLNCDLGEGFGAWQMGNDAAMIELASSVNIACGFHAGDADIMRNTVALAKAGGVSIGAHPGYRDLHGFGRRPVAGLSAAEIENLVAYQIGALQAVASLAGHKVTHVKAHGALSNVACEDDMTANAIAAAIKAVDRNLIFVVLANSRLLKAGEAAGLPLAHEVFADRAYEDDATLVSRKKPGAVLHDPAQIAARVVRMVQDGAVVSVTGKAIKMRTDTVCIHGDTPGAVEIARGVRQALKAAGIAVAPFAGG.

The protein belongs to the LamB/PxpA family. Forms a complex composed of PxpA, PxpB and PxpC.

It catalyses the reaction 5-oxo-L-proline + ATP + 2 H2O = L-glutamate + ADP + phosphate + H(+). Its function is as follows. Catalyzes the cleavage of 5-oxoproline to form L-glutamate coupled to the hydrolysis of ATP to ADP and inorganic phosphate. This Rhodopseudomonas palustris (strain BisB18) protein is 5-oxoprolinase subunit A.